The chain runs to 496 residues: Aspartyl/glutamyl-tRNA(Asn/Gln) amidotransferase subunit B (496 aa).

It belongs to the GatB/GatE family. GatB subfamily. As to quaternary structure, heterotrimer of A, B and C subunits.

The catalysed reaction is L-glutamyl-tRNA(Gln) + L-glutamine + ATP + H2O = L-glutaminyl-tRNA(Gln) + L-glutamate + ADP + phosphate + H(+). The enzyme catalyses L-aspartyl-tRNA(Asn) + L-glutamine + ATP + H2O = L-asparaginyl-tRNA(Asn) + L-glutamate + ADP + phosphate + 2 H(+). Functionally, allows the formation of correctly charged Asn-tRNA(Asn) or Gln-tRNA(Gln) through the transamidation of misacylated Asp-tRNA(Asn) or Glu-tRNA(Gln) in organisms which lack either or both of asparaginyl-tRNA or glutaminyl-tRNA synthetases. The reaction takes place in the presence of glutamine and ATP through an activated phospho-Asp-tRNA(Asn) or phospho-Glu-tRNA(Gln). The polypeptide is Aspartyl/glutamyl-tRNA(Asn/Gln) amidotransferase subunit B (Nitrosospira multiformis (strain ATCC 25196 / NCIMB 11849 / C 71)).